The chain runs to 174 residues: Ribosome maturation factor RimM (174 aa).

A PRC barrel domain is found at 97-169 (GNKFYFHEVI…KVVMDLPEGL (73 aa)).

The protein belongs to the RimM family. In terms of assembly, binds ribosomal protein uS19.

It localises to the cytoplasm. Its function is as follows. An accessory protein needed during the final step in the assembly of 30S ribosomal subunit, possibly for assembly of the head region. Essential for efficient processing of 16S rRNA. May be needed both before and after RbfA during the maturation of 16S rRNA. It has affinity for free ribosomal 30S subunits but not for 70S ribosomes. The polypeptide is Ribosome maturation factor RimM (Flavobacterium psychrophilum (strain ATCC 49511 / DSM 21280 / CIP 103535 / JIP02/86)).